Here is a 364-residue protein sequence, read N- to C-terminus: Putative agmatine deiminase 1 (364 aa).

Catalysis depends on Cys-356, which acts as the Amidino-cysteine intermediate.

It belongs to the agmatine deiminase family.

The catalysed reaction is agmatine + H2O = N-carbamoylputrescine + NH4(+). In Listeria monocytogenes serotype 4b (strain F2365), this protein is Putative agmatine deiminase 1.